We begin with the raw amino-acid sequence, 613 residues long: Dihydroxy-acid dehydratase (613 aa).

Position 81 (D81) interacts with Mg(2+). C122 lines the [2Fe-2S] cluster pocket. Mg(2+) is bound by residues D123 and K124. K124 bears the N6-carboxylysine mark. Residue C193 participates in [2Fe-2S] cluster binding. A Mg(2+)-binding site is contributed by E489. S515 functions as the Proton acceptor in the catalytic mechanism.

The protein belongs to the IlvD/Edd family. In terms of assembly, homodimer. [2Fe-2S] cluster serves as cofactor. The cofactor is Mg(2+).

It catalyses the reaction (2R)-2,3-dihydroxy-3-methylbutanoate = 3-methyl-2-oxobutanoate + H2O. The enzyme catalyses (2R,3R)-2,3-dihydroxy-3-methylpentanoate = (S)-3-methyl-2-oxopentanoate + H2O. It participates in amino-acid biosynthesis; L-isoleucine biosynthesis; L-isoleucine from 2-oxobutanoate: step 3/4. The protein operates within amino-acid biosynthesis; L-valine biosynthesis; L-valine from pyruvate: step 3/4. In terms of biological role, functions in the biosynthesis of branched-chain amino acids. Catalyzes the dehydration of (2R,3R)-2,3-dihydroxy-3-methylpentanoate (2,3-dihydroxy-3-methylvalerate) into 2-oxo-3-methylpentanoate (2-oxo-3-methylvalerate) and of (2R)-2,3-dihydroxy-3-methylbutanoate (2,3-dihydroxyisovalerate) into 2-oxo-3-methylbutanoate (2-oxoisovalerate), the penultimate precursor to L-isoleucine and L-valine, respectively. The sequence is that of Dihydroxy-acid dehydratase from Pseudomonas fluorescens (strain Pf0-1).